The following is an 874-amino-acid chain: MEKLAAGLAGLRWSMGAFPLDLIVSRCRLPTLACLGPGEYAEGVSERDILLIHSCRQWTTVTAHTLEEGHYVIGPKIDIPLQYPGKFKLLEQARDVREPVRYFSSVEEVASVFPDRIFVMEAITFSVKVVSGEFSEDSEVYNFTLHAGDELTLMGQAEILCAKTTKERSRFTTLLRKLGRAGALAGVGGGGPASAGAAGGTGGGGARPVKGKMPCLICMNHRTNESLSLPFQCQGRFSTRSPLELQMQEGEHTVRAIIERVRLPVNVLVPSRPPRNPYDLHPVREGHCYKLVSIISKTVVLGLALRREGPAPLHFLLLTDTPRFALPQGLLAGDPRVERLVRDSASYCRERFDPDEYSTAVREAPAELAEDCASPRRARLCLPAPRAPGLARAPGPLAPAPAGEGDQEYVSPDWAAAPEPAAPPAEIPYEELWAHQGPEGLVRPPPGLDLISFGAAGPPRREPEAPPPPVPPKSEAVKEECRLLNAPPVPPRGGNGSGRLSSSPPVPPRFPKLQPVHSPSSSLSYYSSGLQDGAGSRSGSGSPSPDTYSLYCYPCTWGDCKVGESSSRPAPGPLPSTTQPSQASRALTEPLSGRAASLLGADTPVKTYHSCPPLFKPSHPQKRFAPFGALNPFSGPAYPSGPSAALSSGPRTTSGPVATSGPAYSPGPASPGQAYSAAPPSSCAPSSSSSSEWQEPVLEPFDPFELGQGSSPEPELLRSQEPRAVGTPGPGPRLSPLGPSKAFEPEGLVLHQVPTPLSPAALQGPEAGGALFLTQGRLEGPPASPRDGATGFGVRDASSWQPPADLSALSLEEVSRSLRFIGLSEDVVSFFARERIDGSIFVQLSEDILADDFHLTKLQVKKIMQFIKGWRPKI.

Residues 12-339 are CABIT; sequence RWSMGAFPLD…LLAGDPRVER (328 aa). Over residues 188–206 the composition is skewed to gly residues; sequence GGGGPASAGAAGGTGGGGA. Disordered regions lie at residues 188-207, 388-422, 437-545, 563-598, and 625-742; these read GGGG…GGAR, PGLA…EPAA, GPEG…SPSP, GESS…AASL, and APFG…PSKA. 2 stretches are compositionally biased toward low complexity: residues 388–403 and 518–545; these read PGLA…APAG and SPSS…SPSP. A compositionally biased stretch (polar residues) spans 575–585; that stretch reads PSTTQPSQASR. Composition is skewed to low complexity over residues 632-650 and 658-691; these read PFSG…SSGP and ATSG…SSSS. At Ser-735 the chain carries Phosphoserine. In terms of domain architecture, SAM spans 807-871; sequence SALSLEEVSR…KIMQFIKGWR (65 aa).

This sequence belongs to the GAREM family.

In terms of biological role, probable adapter protein that may provide a link between cell surface epidermal growth factor receptor and the MAPK/ERK signaling pathway. In Homo sapiens (Human), this protein is GRB2-associated and regulator of MAPK protein 2 (GAREM2).